Reading from the N-terminus, the 436-residue chain is Prenyltransferase nscD (436 aa).

This sequence belongs to the tryptophan dimethylallyltransferase family.

It participates in secondary metabolite biosynthesis. Prenyltransferase; part of the gene cluster that mediates the biosynthesis of neosartoricin B, a prenylated anthracenone that probably exhibits T-cell antiproliferative activity, suggestive of a physiological role as an immunosuppressive agent. The non-reducing polyketide synthase nscA probably synthesizes and cyclizes the decaketide backbone. The hydrolase nscB then mediates the product release through hydrolysis followed by spontaneous decarboxylation. The prenyltransferase nscD catalyzes the addition of the dimethylallyl group to the aromatic C5. The FAD-dependent monooxygenase nscC is then responsible for the stereospecific hydroxylation at C2. Neosartoricin B can be converted into two additional compounds neosartoricins C and D. Neosartoricin C is a spirocyclic compound that is cyclized through the attack of C3 hydroxyl on C14, followed by dehydration. On the other hand, neosartoricin D is a further cyclized compound in which attack of C2 on C14 in neosartoricin C results in the formation of the acetal-containing dioxabicyclo-octanone ring. Both of these compounds are novel and possibly represent related metabolites of the gene cluster. This Arthroderma benhamiae (strain ATCC MYA-4681 / CBS 112371) (Trichophyton mentagrophytes) protein is Prenyltransferase nscD.